Reading from the N-terminus, the 264-residue chain is Tritrans,polycis-undecaprenyl-diphosphate synthase (geranylgeranyl-diphosphate specific) (264 aa).

Asp-43 is a catalytic residue. A Mg(2+)-binding site is contributed by Asp-43. Substrate contacts are provided by residues 44–47 (GNRR), Trp-48, His-60, and 88–90 (STE). Asn-91 acts as the Proton acceptor in catalysis. Substrate is bound by residues Phe-92, Arg-94, Arg-213, and 219 to 221 (RIS). Glu-232 lines the Mg(2+) pocket.

This sequence belongs to the UPP synthase family. As to quaternary structure, homodimer. The cofactor is Mg(2+).

It catalyses the reaction geranylgeranyl diphosphate + 7 isopentenyl diphosphate = tri-trans,hepta-cis-undecaprenyl diphosphate + 7 diphosphate. In terms of biological role, catalyzes the sequential condensation of isopentenyl diphosphate (IPP) with geranylgeranyl diphosphate (GGPP) to yield (2Z,6Z,10Z,14Z,18Z,22Z,26Z,30E,34E,38E)-undecaprenyl diphosphate (tritrans,heptacis-UPP). It is probably the precursor of glycosyl carrier lipids. In Pyrococcus abyssi (strain GE5 / Orsay), this protein is Tritrans,polycis-undecaprenyl-diphosphate synthase (geranylgeranyl-diphosphate specific).